A 190-amino-acid polypeptide reads, in one-letter code: Adenylate kinase (190 aa).

An ATP-binding site is contributed by 11-16; sequence GAGKGT. Positions 31 to 60 are NMP; the sequence is STGDIFRFNLKNDTELGKQARVFMDNGELV. AMP-binding positions include Thr32, Arg37, 58–60, 86–89, and Gln93; these read ELV and GYPR. The tract at residues 127–137 is LID; the sequence is ERGKTSGRADD. Arg128 lines the ATP pocket. Arg134 and Arg146 together coordinate AMP. Gly174 lines the ATP pocket.

This sequence belongs to the adenylate kinase family. In terms of assembly, monomer.

It is found in the cytoplasm. It catalyses the reaction AMP + ATP = 2 ADP. It functions in the pathway purine metabolism; AMP biosynthesis via salvage pathway; AMP from ADP: step 1/1. Catalyzes the reversible transfer of the terminal phosphate group between ATP and AMP. Plays an important role in cellular energy homeostasis and in adenine nucleotide metabolism. In Flavobacterium johnsoniae (strain ATCC 17061 / DSM 2064 / JCM 8514 / BCRC 14874 / CCUG 350202 / NBRC 14942 / NCIMB 11054 / UW101) (Cytophaga johnsonae), this protein is Adenylate kinase.